We begin with the raw amino-acid sequence, 281 residues long: 2,3,4,5-tetrahydropyridine-2,6-dicarboxylate N-succinyltransferase (281 aa).

Residues R108 and D145 each coordinate substrate.

The protein belongs to the transferase hexapeptide repeat family. Homotrimer.

It localises to the cytoplasm. It carries out the reaction (S)-2,3,4,5-tetrahydrodipicolinate + succinyl-CoA + H2O = (S)-2-succinylamino-6-oxoheptanedioate + CoA. It participates in amino-acid biosynthesis; L-lysine biosynthesis via DAP pathway; LL-2,6-diaminopimelate from (S)-tetrahydrodipicolinate (succinylase route): step 1/3. This is 2,3,4,5-tetrahydropyridine-2,6-dicarboxylate N-succinyltransferase from Bradyrhizobium diazoefficiens (strain JCM 10833 / BCRC 13528 / IAM 13628 / NBRC 14792 / USDA 110).